The primary structure comprises 162 residues: RNA pyrophosphohydrolase (162 aa).

In terms of domain architecture, Nudix hydrolase spans 11–155; the sequence is PYRPCVGIVL…KRAVYEEVVA (145 aa). Residues 45–66 carry the Nudix box motif; the sequence is GGIDEGEKPREAALRELWEETG.

The protein belongs to the Nudix hydrolase family. RppH subfamily. The cofactor is a divalent metal cation.

Functionally, accelerates the degradation of transcripts by removing pyrophosphate from the 5'-end of triphosphorylated RNA, leading to a more labile monophosphorylated state that can stimulate subsequent ribonuclease cleavage. In Cereibacter sphaeroides (strain ATCC 17029 / ATH 2.4.9) (Rhodobacter sphaeroides), this protein is RNA pyrophosphohydrolase.